We begin with the raw amino-acid sequence, 179 residues long: ATP synthase subunit delta (179 aa).

It belongs to the ATPase delta chain family. As to quaternary structure, F-type ATPases have 2 components, F(1) - the catalytic core - and F(0) - the membrane proton channel. F(1) has five subunits: alpha(3), beta(3), gamma(1), delta(1), epsilon(1). F(0) has three main subunits: a(1), b(2) and c(10-14). The alpha and beta chains form an alternating ring which encloses part of the gamma chain. F(1) is attached to F(0) by a central stalk formed by the gamma and epsilon chains, while a peripheral stalk is formed by the delta and b chains.

The protein resides in the cell membrane. Functionally, f(1)F(0) ATP synthase produces ATP from ADP in the presence of a proton or sodium gradient. F-type ATPases consist of two structural domains, F(1) containing the extramembraneous catalytic core and F(0) containing the membrane proton channel, linked together by a central stalk and a peripheral stalk. During catalysis, ATP synthesis in the catalytic domain of F(1) is coupled via a rotary mechanism of the central stalk subunits to proton translocation. Its function is as follows. This protein is part of the stalk that links CF(0) to CF(1). It either transmits conformational changes from CF(0) to CF(1) or is implicated in proton conduction. The chain is ATP synthase subunit delta from Clostridium perfringens (strain SM101 / Type A).